We begin with the raw amino-acid sequence, 278 residues long: Tryptophan 2,3-dioxygenase (278 aa).

Substrate-binding positions include 47–51, Tyr109, and Arg113; that span reads FIVQH. His236 is a heme binding site. Residue Thr250 coordinates substrate.

This sequence belongs to the tryptophan 2,3-dioxygenase family. Homotetramer. The cofactor is heme.

The catalysed reaction is L-tryptophan + O2 = N-formyl-L-kynurenine. Its pathway is amino-acid degradation; L-tryptophan degradation via kynurenine pathway; L-kynurenine from L-tryptophan: step 1/2. Its function is as follows. Heme-dependent dioxygenase that catalyzes the oxidative cleavage of the L-tryptophan (L-Trp) pyrrole ring and converts L-tryptophan to N-formyl-L-kynurenine. Catalyzes the oxidative cleavage of the indole moiety. This Ralstonia pickettii (strain 12J) protein is Tryptophan 2,3-dioxygenase.